The chain runs to 360 residues: Phosphate acyltransferase (360 aa).

Over residues 296-305 the composition is skewed to basic and acidic residues; the sequence is STLRREHLDR. Residues 296 to 360 form a disordered region; it reads STLRREHLDR…LRTAEPPGSL (65 aa). A compositionally biased stretch (basic residues) spans 314 to 333; it reads PRQRRRPRRQKRRAACRPRP. Over residues 334-350 the composition is skewed to low complexity; that stretch reads RSAAGRAPGSGVRGAAG.

The protein belongs to the PlsX family. As to quaternary structure, homodimer. Probably interacts with PlsY.

The protein localises to the cytoplasm. The catalysed reaction is a fatty acyl-[ACP] + phosphate = an acyl phosphate + holo-[ACP]. Its pathway is lipid metabolism; phospholipid metabolism. Functionally, catalyzes the reversible formation of acyl-phosphate (acyl-PO(4)) from acyl-[acyl-carrier-protein] (acyl-ACP). This enzyme utilizes acyl-ACP as fatty acyl donor, but not acyl-CoA. The sequence is that of Phosphate acyltransferase from Deinococcus radiodurans (strain ATCC 13939 / DSM 20539 / JCM 16871 / CCUG 27074 / LMG 4051 / NBRC 15346 / NCIMB 9279 / VKM B-1422 / R1).